A 271-amino-acid polypeptide reads, in one-letter code: Shikimate dehydrogenase (NADP(+)) (271 aa).

Shikimate is bound by residues 19 to 21 (SLS) and T65. K69 serves as the catalytic Proton acceptor. Position 81 (E81) interacts with NADP(+). Shikimate is bound by residues N90 and D105. NADP(+) is bound by residues 128–132 (GAGGA), 150–155 (NRTIEK), and I211. Shikimate is bound at residue Y213. G234 contacts NADP(+).

The protein belongs to the shikimate dehydrogenase family. As to quaternary structure, homodimer.

The catalysed reaction is shikimate + NADP(+) = 3-dehydroshikimate + NADPH + H(+). It participates in metabolic intermediate biosynthesis; chorismate biosynthesis; chorismate from D-erythrose 4-phosphate and phosphoenolpyruvate: step 4/7. In terms of biological role, involved in the biosynthesis of the chorismate, which leads to the biosynthesis of aromatic amino acids. Catalyzes the reversible NADPH linked reduction of 3-dehydroshikimate (DHSA) to yield shikimate (SA). In Pyrococcus furiosus (strain ATCC 43587 / DSM 3638 / JCM 8422 / Vc1), this protein is Shikimate dehydrogenase (NADP(+)).